The primary structure comprises 160 residues: Ribosomal RNA large subunit methyltransferase H (160 aa).

Residues leucine 76, glycine 108, and 127–132 (LGKMTW) contribute to the S-adenosyl-L-methionine site.

This sequence belongs to the RNA methyltransferase RlmH family. As to quaternary structure, homodimer.

It localises to the cytoplasm. It catalyses the reaction pseudouridine(1915) in 23S rRNA + S-adenosyl-L-methionine = N(3)-methylpseudouridine(1915) in 23S rRNA + S-adenosyl-L-homocysteine + H(+). Its function is as follows. Specifically methylates the pseudouridine at position 1915 (m3Psi1915) in 23S rRNA. The chain is Ribosomal RNA large subunit methyltransferase H from Rhizobium johnstonii (strain DSM 114642 / LMG 32736 / 3841) (Rhizobium leguminosarum bv. viciae).